The chain runs to 269 residues: Troponin T, fast skeletal muscle (269 aa).

Positions methionine 1–alanine 23 are enriched in acidic residues. The interval methionine 1–lysine 72 is disordered. N-acetylserine is present on serine 2. Serine 2 is modified (phosphoserine). Residues alanine 24–glutamate 34 are compositionally biased toward basic and acidic residues. A compositionally biased stretch (acidic residues) spans glutamate 35–glutamate 47. Residues proline 60–lysine 72 show a composition bias toward basic and acidic residues. Serine 88 is subject to Phosphoserine. Residues arginine 111–lysine 153 show a composition bias toward basic and acidic residues. A disordered region spans residues arginine 111–leucine 158. Phosphoserine occurs at positions 159, 166, and 167. Residues arginine 245–lysine 269 are disordered.

It belongs to the troponin T family. As to expression, in fetal and adult fast skeletal muscles, with a higher level expression in fetal than in adult muscle.

In terms of biological role, troponin T is the tropomyosin-binding subunit of troponin, the thin filament regulatory complex which confers calcium-sensitivity to striated muscle actomyosin ATPase activity. This chain is Troponin T, fast skeletal muscle (TNNT3), found in Homo sapiens (Human).